The sequence spans 331 residues: Adenosine deaminase (331 aa).

Residues histidine 12 and histidine 14 each contribute to the Zn(2+) site. 3 residues coordinate substrate: histidine 14, aspartate 16, and glycine 170. Histidine 197 contacts Zn(2+). Glutamate 200 functions as the Proton donor in the catalytic mechanism. Aspartate 278 is a Zn(2+) binding site. A substrate-binding site is contributed by aspartate 279.

Belongs to the metallo-dependent hydrolases superfamily. Adenosine and AMP deaminases family. Adenosine deaminase subfamily. Requires Zn(2+) as cofactor.

The catalysed reaction is adenosine + H2O + H(+) = inosine + NH4(+). It catalyses the reaction 2'-deoxyadenosine + H2O + H(+) = 2'-deoxyinosine + NH4(+). Functionally, catalyzes the hydrolytic deamination of adenosine and 2-deoxyadenosine. This Shewanella loihica (strain ATCC BAA-1088 / PV-4) protein is Adenosine deaminase.